The sequence spans 832 residues: AP-1 complex subunit gamma-1 (832 aa).

The GAE domain occupies 733-832 (LNVYASLLSA…QFDHKFDETL (100 aa)).

As to quaternary structure, adapter protein complex 1 (AP-1) is a heterotetramer composed of two large adaptins (gamma-type subunit APL4 and beta-type subunit APL2), a medium adaptin (mu-type subunit APM1) and a small adaptin (sigma-type subunit APS1). AP-1 interacts with clathrin. Also a component of the AP-1R complex composed of at least APM2, APL4 and APS1.

It localises to the cytoplasm. The protein resides in the golgi apparatus membrane. The protein localises to the cytoplasmic vesicle. It is found in the clathrin-coated vesicle membrane. In terms of biological role, adaptins are components of the adapter complexes which link clathrin to receptors in coated vesicles. Clathrin-associated protein complexes are believed to interact with the cytoplasmic tails of membrane proteins, leading to their selection and concentration. The AP-1 complex interacts directly with clathrin. Component of the AP-1-related (AP-1R) complex, an adapter protein complex that mediates sorting of cargo SNARE SNC1. In contrast to the APM1-containing AP-1 complex, AP-1R is incapable of sorting CHS3. In Saccharomyces cerevisiae (strain ATCC 204508 / S288c) (Baker's yeast), this protein is AP-1 complex subunit gamma-1 (APL4).